Consider the following 330-residue polypeptide: GMP reductase (330 aa).

Residue cysteine 180 is the Thioimidate intermediate of the active site. NADP(+) is bound at residue 209 to 232; sequence LIADGGIRHNGDIAKSVRFGASMV.

It belongs to the IMPDH/GMPR family. GuaC type 2 subfamily.

It carries out the reaction IMP + NH4(+) + NADP(+) = GMP + NADPH + 2 H(+). Catalyzes the irreversible NADPH-dependent deamination of GMP to IMP. It functions in the conversion of nucleobase, nucleoside and nucleotide derivatives of G to A nucleotides, and in maintaining the intracellular balance of A and G nucleotides. The sequence is that of GMP reductase from Lactobacillus acidophilus (strain ATCC 700396 / NCK56 / N2 / NCFM).